Consider the following 453-residue polypeptide: Frizzled/smoothened-like sans CRD protein G (453 aa).

The first 24 residues, 1-24 (MIYILKNFIIILFFLLIILKRIES), serve as a signal peptide directing secretion. Over 25 to 89 (QSLPSLPSPT…PFFTLDEWNK (65 aa)) the chain is Extracellular. N-linked (GlcNAc...) asparagine glycans are attached at residues asparagine 49 and asparagine 67. A helical transmembrane segment spans residues 90–110 (FLYMSLVMGTISFLCGLFLLI). The Cytoplasmic segment spans residues 111–124 (TYSPIVNKTHNRHT). The helical transmembrane segment at 125-145 (IGVMCMSFGVCLAMCSDMWNF) threads the bilayer. Over 146–170 (GSNFTDQKSICPSPGQYLTTSNSRC) the chain is Extracellular. N-linked (GlcNAc...) asparagine glycosylation occurs at asparagine 148. A helical transmembrane segment spans residues 171–191 (LGSGIVLQFGGVFGFLNWTLL). The Cytoplasmic portion of the chain corresponds to 192 to 209 (SFDLFMNIKGIITKNYDK). Residues 210-230 (YYFVATFIIAIIFTFVPIVND) form a helical membrane-spanning segment. Topologically, residues 231–250 (QYSMSYIGLGCWLGSAVYQL) are extracellular. Residues 251–271 (IFFWILLSICLIVSSVFIILI) traverse the membrane as a helical segment. The Cytoplasmic portion of the chain corresponds to 272 to 296 (LKEIYIIIKQSKQKTSLKGNIRPLL). A helical transmembrane segment spans residues 297–317 (CITVTSFAFFYMFFYYISIVI). Residues 318–352 (EGDYYERILNEYTDCLMDPTKDVSECKFPRMSVAN) are Extracellular-facing. Residues 353–373 (EFVFLLCLRLLGIGAFIFYGI) form a helical membrane-spanning segment. At 374-453 (NKEVKKIWLN…DDNFKPIIIK (80 aa)) the chain is on the cytoplasmic side.

It belongs to the G-protein coupled receptor Fz/Smo family.

It is found in the membrane. This chain is Frizzled/smoothened-like sans CRD protein G (fscG), found in Dictyostelium discoideum (Social amoeba).